The primary structure comprises 501 residues: Probable Xaa-Pro aminopeptidase pepP (501 aa).

A disordered region spans residues 1–25; that stretch reads MNYHSFLPLRRSSLSHSTTPPSKSR. Residues 12–25 show a composition bias toward polar residues; that stretch reads SSLSHSTTPPSKSR. Mn(2+) is bound by residues D298, D309, E432, and E472.

The protein belongs to the peptidase M24B family. Requires Mn(2+) as cofactor.

It carries out the reaction Release of any N-terminal amino acid, including proline, that is linked to proline, even from a dipeptide or tripeptide.. Its function is as follows. Catalyzes the removal of a penultimate prolyl residue from the N-termini of peptides. The sequence is that of Probable Xaa-Pro aminopeptidase pepP (pepP) from Metarhizium acridum (strain CQMa 102).